Consider the following 290-residue polypeptide: Protein MGF 110-9L (290 aa).

A signal peptide spans 1-19 (MKVIVLLLVLAVMQPVIQS). An A repeat occupies 1-160 (MKVIVLLLVL…QYSRMRMQAA (160 aa)). 2 helical membrane passes run 128-148 (VENI…IGYV) and 163-183 (LLIF…IIMN). The stretch at 161–290 (TRLLIFLGLY…KRHVINQDDL (130 aa)) is one B repeat.

The protein belongs to the asfivirus MGF 110 family.

It is found in the membrane. The chain is Protein MGF 110-9L from Ornithodoros (relapsing fever ticks).